Consider the following 1517-residue polypeptide: uncharacterized protein (1517 aa).

The span at 1-13 shows a compositional bias: polar residues; it reads MNQFPNQPGNFGQ. The tract at residues 1-26 is disordered; sequence MNQFPNQPGNFGQNYYKPVQGSIPAN. 3 N-linked (GlcNAc...) asparagine glycosylation sites follow: Asn-35, Asn-40, and Asn-76. Transmembrane regions (helical) follow at residues 231-251, 397-417, 510-530, 612-632, and 720-740; these read AIDF…AVPI, AIGL…TVWC, FVPL…KDWI, PNIV…FFAL, and VFDC…VVLL. Residue Asn-917 is glycosylated (N-linked (GlcNAc...) asparagine). 4 consecutive transmembrane segments (helical) span residues 956-976, 985-1005, 1051-1071, and 1114-1134; these read FVYA…VPPL, VPAF…VNSE, VKLD…AFWS, and GIGF…TYLL. Asn-1178 is a glycosylation site (N-linked (GlcNAc...) asparagine). Residues 1261 to 1281 form a helical membrane-spanning segment; that stretch reads PYALPLLDSGMVPVSTQLAIV. Asn-1321 is a glycosylation site (N-linked (GlcNAc...) asparagine). Helical transmembrane passes span 1353-1373 and 1408-1428; these read APVV…TFEV and VVVV…PVVI.

It to S.pombe SpAC22F3.04.

It is found in the membrane. This is an uncharacterized protein from Schizosaccharomyces pombe (strain 972 / ATCC 24843) (Fission yeast).